Here is a 180-residue protein sequence, read N- to C-terminus: Ribosome-recycling factor (180 aa).

The protein belongs to the RRF family.

It localises to the cytoplasm. Its function is as follows. Responsible for the release of ribosomes from messenger RNA at the termination of protein biosynthesis. May increase the efficiency of translation by recycling ribosomes from one round of translation to another. This is Ribosome-recycling factor from Chlamydia abortus (strain DSM 27085 / S26/3) (Chlamydophila abortus).